The following is a 604-amino-acid chain: Afamin (604 aa).

Positions 1–21 are cleaved as a signal peptide; sequence MKQLKLTGFVIFFFFLTESLT. 3 Albumin domains span residues 22-210, 211-403, and 404-598; these read LPTQ…EPFI, YYLK…RFNE, and TTEK…PKLA. 17 disulfide bridges follow: Cys77–Cys86, Cys99–Cys114, Cys113–Cys124, Cys148–Cys193, Cys192–Cys201, Cys224–Cys270, Cys269–Cys277, Cys289–Cys303, Cys302–Cys313, Cys340–Cys385, Cys384–Cys393, Cys416–Cys462, Cys461–Cys470, Cys483–Cys499, Cys498–Cys509, Cys536–Cys581, and Cys580–Cys589. Asn109 carries N-linked (GlcNAc...) asparagine glycosylation. The tract at residues 215-319 is binding pocket for hydrophobic ligands; that stretch reads ALSSYQKNAC…RGECIIYSNK (105 aa). An N-linked (GlcNAc...) asparagine glycan is attached at Asn434.

Belongs to the ALB/AFP/VDB family. Forms a 1:1 complex with Wnt family members; interacts with WNT3A and WNT5A. Interacts with WNT1, WNT2B, WNT3, WNT7A, WNT7B, WNT8, WNT9A, WNT9B, WNT10A and WNT10B. Post-translationally, N-glycosylated; more than 90% of the glycans are sialylated.

It is found in the secreted. Functions as a carrier for hydrophobic molecules in body fluids. Essential for the solubility and activity of lipidated Wnt family members, including WNT1, WNT2B, WNT3, WNT3A, WNT5A, WNT7A, WNT7B, WNT8, WNT9A, WNT9B, WNT10A and WNT10B. Binds vitamin E. May transport vitamin E in body fluids under conditions where the lipoprotein system is not sufficient. May be involved in the transport of vitamin E across the blood-brain barrier. This chain is Afamin (AFM), found in Bos taurus (Bovine).